Consider the following 147-residue polypeptide: MTIKLHHLRPAPGAKTDKTRVGRGEGSKGKTAGRGTKGTKARKNVPAAFEGGQMPIHMRLPKLKGFTNKFRTEYQVVNVGRIAELFPQGGTVGKAELVAAGAVRKNQLVKVLGDGEIGVAVQVTADKVTGSAKEKITAAGGTVTELA.

The disordered stretch occupies residues 1 to 42 (MTIKLHHLRPAPGAKTDKTRVGRGEGSKGKTAGRGTKGTKAR). Residues 15 to 28 (KTDKTRVGRGEGSK) are compositionally biased toward basic and acidic residues.

The protein belongs to the universal ribosomal protein uL15 family. In terms of assembly, part of the 50S ribosomal subunit.

Its function is as follows. Binds to the 23S rRNA. This is Large ribosomal subunit protein uL15 from Nocardia farcinica (strain IFM 10152).